The chain runs to 428 residues: MAKEKPILNVAFIGHVDAGKSTTVGRLLLDGGAIDPQLIVRLRKEAEEKGKAGFEFAYVMDGLKEERERGVTIDVAHKKFPTAKYEVTIVDCPGHRDFIKNMITGASQADAAILVVNVDDAKSGIQPQTREHVFLSRTLGISQLAVAINKMDTVNFSEADYNEMKKMLGDQLLKMVGFNPDNITFVPVASLHGDNVFKKSDKTPWYNGPTLAEVIDAFQPPEKPTTLPLRLPIQDVYSITGVGTVPVGRVETGIIRPGDKVIFEPAGAVGEIKTVEMHHEQLPSAEPGDNIGFNVRGVGKKDIKRGDVLGHTTNPPTVAADFTAQIVVLQHPSVMTVGYTPVFHAHTAQIACTFMELQKKLNPATGEVLEENPDFLKAGDAAIVKLMPTKPLVIESVKEIPQLGRFAIRDMGMTVAAGMAIQVTAKNK.

One can recognise a tr-type G domain in the interval 5-225 (KPILNVAFIG…DAFQPPEKPT (221 aa)). The G1 stretch occupies residues 14–21 (GHVDAGKS). Position 14–21 (14–21 (GHVDAGKS)) interacts with GTP. Residue serine 21 participates in Mg(2+) binding. A G2 region spans residues 70-74 (GVTID). Residues 91 to 94 (DCPG) form a G3 region. Residues 91–95 (DCPGH) and 149–152 (NKMD) contribute to the GTP site. The interval 149-152 (NKMD) is G4. The G5 stretch occupies residues 189–191 (ASL).

It belongs to the TRAFAC class translation factor GTPase superfamily. Classic translation factor GTPase family. EF-Tu/EF-1A subfamily.

It localises to the cytoplasm. The enzyme catalyses GTP + H2O = GDP + phosphate + H(+). In terms of biological role, GTP hydrolase that promotes the GTP-dependent binding of aminoacyl-tRNA to the A-site of ribosomes during protein biosynthesis. The polypeptide is Elongation factor 1-alpha (Methanococcus maripaludis (strain C7 / ATCC BAA-1331)).